The sequence spans 202 residues: Pyrrolidone-carboxylate peptidase (202 aa).

Residues Glu78, Cys141, and His165 contribute to the active site.

The protein belongs to the peptidase C15 family. As to quaternary structure, homotetramer.

Its subcellular location is the cytoplasm. The catalysed reaction is Release of an N-terminal pyroglutamyl group from a polypeptide, the second amino acid generally not being Pro.. In terms of biological role, removes 5-oxoproline from various penultimate amino acid residues except L-proline. This chain is Pyrrolidone-carboxylate peptidase, found in Thermosipho melanesiensis (strain DSM 12029 / CIP 104789 / BI429).